Consider the following 241-residue polypeptide: Ribosome assembly factor mrt4 (241 aa).

This sequence belongs to the universal ribosomal protein uL10 family. In terms of assembly, associates with the pre-60S ribosomal particle.

It localises to the nucleus. The protein localises to the nucleolus. The protein resides in the cytoplasm. Functionally, component of the ribosome assembly machinery. Nuclear paralog of the ribosomal protein P0, it binds pre-60S subunits at an early stage of assembly in the nucleolus, and is replaced by P0 in cytoplasmic pre-60S subunits and mature 80S ribosomes. The polypeptide is Ribosome assembly factor mrt4 (Schizosaccharomyces pombe (strain 972 / ATCC 24843) (Fission yeast)).